Consider the following 87-residue polypeptide: U14-lycotoxin-Ls1a (87 aa).

Positions 1–20 are cleaved as a signal peptide; it reads MNSKVFAVLLLLALLTCVLS. A WAP domain is found at 21-66; it reads EKYCPTPRNTSCKKMNIRNNCCRDSDCTSNAFCCAEPCGNFCHKAS. Disulfide bonds link cysteine 24-cysteine 54, cysteine 32-cysteine 58, cysteine 41-cysteine 53, cysteine 42-cysteine 80, and cysteine 47-cysteine 62.

The protein belongs to the venom protein 11 family. 01 (wap-1) subfamily. Contains 5 disulfide bonds. In terms of tissue distribution, expressed by the venom gland.

Its subcellular location is the secreted. Functionally, has antibacterial activity. The chain is U14-lycotoxin-Ls1a from Lycosa singoriensis (Wolf spider).